A 43-amino-acid chain; its full sequence is Metallothionein-3 (43 aa).

The protein belongs to the metallothionein superfamily. Type 5 family.

Functionally, this protein binds cations of several transition elements. Thought to be involved in metal ion homeostasis. The protein is Metallothionein-3 (MtnC) of Drosophila melanogaster (Fruit fly).